The chain runs to 388 residues: MAFPRTLAILAAAAALVVACSHGGTPTGSSTTSGASPATPVAVPVPRSCAEPAGIPALLSPRDKLAQLLVVGVRDAADAQAVVTNYHVGGILIGSDTDLTIFDGALAEIVAGGGPLPLAVSVDEEGGRVSRLRSLIGGTGPSARELAQTRTVQQVRDLARDRGRQMRKLGITIDFAPVVDVTDAPDDTVIGDRSFGSDPATVTAYAGAYAQGLRDAGVLPVLKHFPGHGRGSGDSHNGGVTTPPLDDLVGDDLVPYRTLVTQAPVGVMVGHLQVPGLTGSEPASLSKAAVNLLRTGTGYGAPPFDGPVFSDDLSGMAAISDRFGVSEAVLRTLQAGADIALWVTTKEVPAVLDRLEQALRAGELPMSAVDRSVVRVATMKGPNPGCGR.

The signal sequence occupies residues 1–19; it reads MAFPRTLAILAAAAALVVA. Residue Cys20 is the site of N-palmitoyl cysteine attachment. A lipid anchor (S-diacylglycerol cysteine) is attached at Cys20. Substrate-binding positions include Asp123, Arg131, Arg193, and 223 to 224; that span reads KH. The active-site Proton donor/acceptor is His236. Asp311 (nucleophile) is an active-site residue.

It belongs to the glycosyl hydrolase 3 family.

It is found in the cell inner membrane. It carries out the reaction Hydrolysis of terminal non-reducing N-acetyl-D-hexosamine residues in N-acetyl-beta-D-hexosaminides.. It functions in the pathway cell wall biogenesis; peptidoglycan recycling. Plays a role in peptidoglycan recycling by cleaving the terminal beta-1,4-linked N-acetylglucosamine (GlcNAc) from peptidoglycan fragments. Acts as a regulator for GlcNAc-MurNAc levels by cleaving disaccharides and allowing the breakdown of MurNAc. The chain is Beta-hexosaminidase LpqI from Mycobacterium tuberculosis (strain ATCC 25618 / H37Rv).